Here is a 338-residue protein sequence, read N- to C-terminus: Glyceraldehyde-3-phosphate dehydrogenase, cytosolic (338 aa).

Residues 14 to 15, aspartate 36, and arginine 83 each bind NAD(+); that span reads RI. Residues 154–156, threonine 185, 214–215, and arginine 237 contribute to the D-glyceraldehyde 3-phosphate site; these read SCT and TG. Catalysis depends on cysteine 155, which acts as the Nucleophile. NAD(+) is bound at residue asparagine 319.

Belongs to the glyceraldehyde-3-phosphate dehydrogenase family. In terms of assembly, homotetramer.

It localises to the cytoplasm. The catalysed reaction is D-glyceraldehyde 3-phosphate + phosphate + NAD(+) = (2R)-3-phospho-glyceroyl phosphate + NADH + H(+). It functions in the pathway carbohydrate degradation; glycolysis; pyruvate from D-glyceraldehyde 3-phosphate: step 1/5. Key enzyme in glycolysis that catalyzes the first step of the pathway by converting D-glyceraldehyde 3-phosphate (G3P) into 3-phospho-D-glyceroyl phosphate. Essential for the maintenance of cellular ATP levels and carbohydrate metabolism. The polypeptide is Glyceraldehyde-3-phosphate dehydrogenase, cytosolic (GAPC) (Ranunculus acris (Meadow buttercup)).